A 1183-amino-acid chain; its full sequence is MEQVLSSPQGCSEWEVNGKTEWESDQNPLGFLLVDKENSSVADPTNEIFQENAINLDDLFWASQTYSWENGLDCVYPEWKAQPPPSQDLKGDGNSGISQLVEGDLICFNSRSASPSLADRPVQDNNLYDHAEQVEVTATSSTLNVCTGELGINAPTLHTDKTLLQDTHLMLEESHLTNCEFSCNSGVENESQNFLSHGTRNILESEGLFAVSPVEVSCVDTNSNPKPTIVCQTPPLASEHIYLSSSALPCEPVFPMTCTKPHVPPYHAGSATLPMDEVEMMLPKLQGGEGESSKPSANNRTLEPQRLDANTDTTHLSVCPLGESDISPEHCEEMLHELSTKCTVEMVEEEVNKKSVSSNTTNTAFSKPKTELCEELSGCTLGVLLETVSGDVKEEAASDSRTDHVFPETQTDLAPVALIDSQAEDPSTESLPRKNGQEESKSALPVSTPEHNALFELSSGNVVLPEDHSQSTFSAQTQALSEVDHDGDLTPDGMLTDNIVCEAVTSIDSVILSLTDSFELPKLSDCDLSSHDFESHALTLEIQNNVTCVQTGSVDNNPEEMSTPFTCTDNQLTVTGGLAGLDLTETTSQSGEASGEGEAGLPVLPTHQEDFHQLTPSEINLAQEQQVSSVVPSSPPSHRDVFPCGASLDGEAYLTLMENNPDTLKHAEMTLDLCKASDALPTKSLQIAPVDLIHVPIVSATAPRSEEQSALRAVFQALDQDGDGFVHIEEFIEFAKAYGAEQVKDLTRFLDPSGLGVISFEDFHRGISAISNEESAYSECETFTDEDTTALVHPELHEDVETDSGIENTLTDGDDRNSPSSFPASFQNFLQSEALEFFCTHCHKQISRLEDLSTRLQLLEMNRHLQQSNNLDVMGDLTQDILDLADRDITDKVLLLEKRVCELEKDSLESEEQHARLRQENLTLVHRANALEEQLKEQELRTEEDLLAQTRKHRDALNKLQRERDLEIENLQARLHQLDEENSELRSCVPCLRANIERLEEEKRKLQDEADDITQRLNEESESRRKMSDKLSHERHTNQKEKECTQGLIEDLRKQLEHLQLFKLETEARRGRSSSNGLQEYNTHMRENELEQEIRRLKQDNRSLKEQNDELNGQIINLSIQGAKSLFTESLSESLAAEINNVSRAELMEAIHKQEEINFRLQDYIDRIIVAIMESNPSILEVK.

A disordered region spans residues 423–448 (AEDPSTESLPRKNGQEESKSALPVST). Residues 431 to 441 (LPRKNGQEESK) are compositionally biased toward basic and acidic residues. 2 EF-hand domains span residues 706 to 741 (EEQS…YGAE) and 738 to 773 (YGAE…ISNE). Ca(2+) is bound by residues Asp719, Asp721, Asp723, Glu730, Asp751, Ser753, and Asp762. A coiled-coil region spans residues 902–1121 (ELEKDSLESE…NGQIINLSIQ (220 aa)). The tract at residues 911 to 1015 (EEQHARLRQE…LQDEADDITQ (105 aa)) is ARF-binding domain (ABD). A disordered region spans residues 1005–1044 (KLQDEADDITQRLNEESESRRKMSDKLSHERHTNQKEKEC). The region spanning 1121 to 1183 (QGAKSLFTES…ESNPSILEVK (63 aa)) is the FIP-RBD domain.

It is found in the recycling endosome membrane. The protein resides in the cytoplasm. It localises to the cytoskeleton. Its subcellular location is the microtubule organizing center. The protein localises to the centrosome. It is found in the cleavage furrow. The protein resides in the midbody. It localises to the golgi apparatus membrane. Its subcellular location is the golgi apparatus. The protein localises to the trans-Golgi network membrane. Downstream effector molecule for Rab11 GTPase which acts as a regulator of endocytic trafficking, cytokinesis and intracellular ciliogenesis by participating in membrane delivery. This Danio rerio (Zebrafish) protein is Rab11 family-interacting protein 3 (rab11fip3).